A 314-amino-acid polypeptide reads, in one-letter code: 4-hydroxy-3-methylbut-2-enyl diphosphate reductase (314 aa).

Cysteine 12 provides a ligand contact to [4Fe-4S] cluster. 2 residues coordinate (2E)-4-hydroxy-3-methylbut-2-enyl diphosphate: histidine 41 and histidine 74. 2 residues coordinate dimethylallyl diphosphate: histidine 41 and histidine 74. Isopentenyl diphosphate-binding residues include histidine 41 and histidine 74. Position 96 (cysteine 96) interacts with [4Fe-4S] cluster. A (2E)-4-hydroxy-3-methylbut-2-enyl diphosphate-binding site is contributed by histidine 124. Histidine 124 contacts dimethylallyl diphosphate. Histidine 124 lines the isopentenyl diphosphate pocket. Glutamate 126 (proton donor) is an active-site residue. Threonine 167 provides a ligand contact to (2E)-4-hydroxy-3-methylbut-2-enyl diphosphate. [4Fe-4S] cluster is bound at residue cysteine 197. (2E)-4-hydroxy-3-methylbut-2-enyl diphosphate contacts are provided by serine 225, serine 226, asparagine 227, and serine 269. Dimethylallyl diphosphate is bound by residues serine 225, serine 226, asparagine 227, and serine 269. Isopentenyl diphosphate contacts are provided by serine 225, serine 226, asparagine 227, and serine 269.

It belongs to the IspH family. [4Fe-4S] cluster is required as a cofactor.

The enzyme catalyses isopentenyl diphosphate + 2 oxidized [2Fe-2S]-[ferredoxin] + H2O = (2E)-4-hydroxy-3-methylbut-2-enyl diphosphate + 2 reduced [2Fe-2S]-[ferredoxin] + 2 H(+). It catalyses the reaction dimethylallyl diphosphate + 2 oxidized [2Fe-2S]-[ferredoxin] + H2O = (2E)-4-hydroxy-3-methylbut-2-enyl diphosphate + 2 reduced [2Fe-2S]-[ferredoxin] + 2 H(+). Its pathway is isoprenoid biosynthesis; dimethylallyl diphosphate biosynthesis; dimethylallyl diphosphate from (2E)-4-hydroxy-3-methylbutenyl diphosphate: step 1/1. It functions in the pathway isoprenoid biosynthesis; isopentenyl diphosphate biosynthesis via DXP pathway; isopentenyl diphosphate from 1-deoxy-D-xylulose 5-phosphate: step 6/6. In terms of biological role, catalyzes the conversion of 1-hydroxy-2-methyl-2-(E)-butenyl 4-diphosphate (HMBPP) into a mixture of isopentenyl diphosphate (IPP) and dimethylallyl diphosphate (DMAPP). Acts in the terminal step of the DOXP/MEP pathway for isoprenoid precursor biosynthesis. The sequence is that of 4-hydroxy-3-methylbut-2-enyl diphosphate reductase from Actinobacillus pleuropneumoniae serotype 7 (strain AP76).